The primary structure comprises 359 residues: Aromatic amino acid aminotransferase (359 aa).

A compositionally biased stretch (basic and acidic residues) spans 1–12; it reads MSETSPKLRAEL. Positions 1 to 21 are disordered; sequence MSETSPKLRAELEGIPTYKPG. K223 is subject to N6-(pyridoxal phosphate)lysine.

The protein belongs to the class-II pyridoxal-phosphate-dependent aminotransferase family. Homodimer. Pyridoxal 5'-phosphate is required as a cofactor.

The catalysed reaction is an aromatic L-alpha-amino acid + 2-oxoglutarate = an aromatic oxo-acid + L-glutamate. In terms of biological role, aminotransferase that catalyzes the conversion of aromatic amino acids and 2-oxoglutarate into corresponding aromatic oxo acids and L-glutamate. The protein is Aromatic amino acid aminotransferase of Streptomyces coelicolor (strain ATCC BAA-471 / A3(2) / M145).